The sequence spans 57 residues: Small ribosomal subunit protein bS21 (57 aa).

The tract at residues 22–57 (QCSKSGVLSEAKKRKHYEKPSEKRKRKATEKRNSRK) is disordered. Basic residues predominate over residues 33–57 (KKRKHYEKPSEKRKRKATEKRNSRK).

Belongs to the bacterial ribosomal protein bS21 family.

This Natranaerobius thermophilus (strain ATCC BAA-1301 / DSM 18059 / JW/NM-WN-LF) protein is Small ribosomal subunit protein bS21.